The chain runs to 302 residues: Methionyl-tRNA formyltransferase (302 aa).

108-111 (SILP) lines the (6S)-5,6,7,8-tetrahydrofolate pocket.

This sequence belongs to the Fmt family.

The enzyme catalyses L-methionyl-tRNA(fMet) + (6R)-10-formyltetrahydrofolate = N-formyl-L-methionyl-tRNA(fMet) + (6S)-5,6,7,8-tetrahydrofolate + H(+). Attaches a formyl group to the free amino group of methionyl-tRNA(fMet). The formyl group appears to play a dual role in the initiator identity of N-formylmethionyl-tRNA by promoting its recognition by IF2 and preventing the misappropriation of this tRNA by the elongation apparatus. The sequence is that of Methionyl-tRNA formyltransferase from Sulfurimonas denitrificans (strain ATCC 33889 / DSM 1251) (Thiomicrospira denitrificans (strain ATCC 33889 / DSM 1251)).